A 188-amino-acid chain; its full sequence is Phosphatidylcholine-sterol acyltransferase (188 aa).

An N-linked (GlcNAc...) asparagine glycan is attached at Asn20. Catalysis depends on His169, which acts as the Charge relay system.

The protein belongs to the AB hydrolase superfamily. Lipase family. Detected in blood plasma (at protein level).

It is found in the secreted. It carries out the reaction a sterol + a 1,2-diacyl-sn-glycero-3-phosphocholine = a sterol ester + a 1-acyl-sn-glycero-3-phosphocholine. The catalysed reaction is a 1-O-alkyl-2-acetyl-sn-glycero-3-phosphocholine + H2O = a 1-O-alkyl-sn-glycero-3-phosphocholine + acetate + H(+). It catalyses the reaction a 1-hexadecanoyl-2-acyl-sn-glycero-3-phosphocholine + (24S)-hydroxycholesterol = (24S)-24-hydroxycholesterol ester + 1-hexadecanoyl-sn-glycero-3-phosphocholine. The enzyme catalyses (24S)-hydroxycholesterol + 1-hexadecanoyl-2-(9Z,12Z-octadecadienoyl)-sn-glycero-3-phosphocholine = (24S)-hydroxycholesterol 3-linoleoate + 1-hexadecanoyl-sn-glycero-3-phosphocholine. It carries out the reaction 1-hexadecanoyl-2-(5Z,8Z,11Z,14Z-eicosatetraenoyl)-sn-glycero-3-phosphocholine + cholesterol = cholesteryl (5Z,8Z,11Z,14Z)-eicosatetraenoate + 1-hexadecanoyl-sn-glycero-3-phosphocholine. The catalysed reaction is 1-hexadecanoyl-2-(9Z-octadecenoyl)-sn-glycero-3-phosphocholine + cholesterol = cholesteryl (9Z-octadecenoate) + 1-hexadecanoyl-sn-glycero-3-phosphocholine. It catalyses the reaction 1-hexadecanoyl-2-(8Z,11Z,14Z-eicosatrienoyl)-sn-glycero-3-phosphocholine + cholesterol = cholesteryl (8Z,11Z,14Z)-eicosatrienoate + 1-hexadecanoyl-sn-glycero-3-phosphocholine. The enzyme catalyses 1-hexadecanoyl-2-(5Z,8Z,11Z-eicosatrienoyl)-sn-glycero-3-phosphocholine + cholesterol = cholesteryl (5Z,8Z,11Z)-eicosatrienoate + 1-hexadecanoyl-sn-glycero-3-phosphocholine. It carries out the reaction 1-hexadecanoyl-2-(5Z,8Z,11Z,14Z,17Z-eicosapentaenoyl)-sn-glycero-3-phosphocholine + cholesterol = (5Z,8Z,11Z,14Z,17Z-eicosapentaenoyl)-cholesterol + 1-hexadecanoyl-sn-glycero-3-phosphocholine. The catalysed reaction is 1-hexadecanoyl-2-(9Z,12Z-octadecadienoyl)-sn-glycero-3-phosphocholine + cholesterol = cholesteryl (9Z,12Z)-octadecadienoate + 1-hexadecanoyl-sn-glycero-3-phosphocholine. It catalyses the reaction 1-hexadecanoyl-2-(6Z,9Z,12Z-octadecatrienoyl)-sn-glycero-3-phosphocholine + cholesterol = (6Z,9Z,12Z-octadecatrienoyl)-cholesterol + 1-hexadecanoyl-sn-glycero-3-phosphocholine. The enzyme catalyses 1-hexadecanoyl-2-(11Z,14Z,17Z-eicosatrienoyl)-sn-glycero-3-phosphocholine + cholesterol = (11Z,14Z,17Z-eicosatrienoyl)-cholesterol + 1-hexadecanoyl-sn-glycero-3-phosphocholine. It carries out the reaction 1-hexadecanoyl-2-(9Z,12Z,15Z-octadecatrienoyl)-sn-glycero-3-phosphocholine + cholesterol = (9Z,12Z,15Z-octadecatrienoyl)-cholesterol + 1-hexadecanoyl-sn-glycero-3-phosphocholine. The catalysed reaction is 1-hexadecanoyl-2-(9Z,12Z-octadecadienoyl)-sn-glycero-3-phosphocholine + H2O = (9Z,12Z)-octadecadienoate + 1-hexadecanoyl-sn-glycero-3-phosphocholine + H(+). It catalyses the reaction 1-hexadecanoyl-2-(5Z,8Z,11Z,14Z-eicosatetraenoyl)-sn-glycero-3-phosphocholine + H2O = 1-hexadecanoyl-sn-glycero-3-phosphocholine + (5Z,8Z,11Z,14Z)-eicosatetraenoate + H(+). The enzyme catalyses a 1-O-alkyl-2-acetyl-sn-glycero-3-phosphocholine + 1-hexadecanoyl-sn-glycero-3-phosphocholine = 1-hexadecanoyl-2-acetyl-sn-glycero-3-phosphocholine + a 1-O-alkyl-sn-glycero-3-phosphocholine. Central enzyme in the extracellular metabolism of plasma lipoproteins. Synthesized mainly in the liver and secreted into plasma where it converts cholesterol and phosphatidylcholines (lecithins) to cholesteryl esters and lysophosphatidylcholines on the surface of high and low density lipoproteins (HDLs and LDLs). The cholesterol ester is then transported back to the liver. Also produced in the brain by primary astrocytes, and esterifies free cholesterol on nascent APOE-containing lipoproteins secreted from glia and influences cerebral spinal fluid (CSF) APOE- and APOA1 levels. Together with APOE and the cholesterol transporter ABCA1, plays a key role in the maturation of glial-derived, nascent lipoproteins. Required for remodeling high-density lipoprotein particles into their spherical forms. Has a preference for plasma 16:0-18:2 or 18:O-18:2 phosphatidylcholines. Catalyzes the hydrolysis of 1-O-alkyl-2-acetyl-sn-glycero-3-phosphocholine (platelet-activating factor or PAF) to 1-O-alkyl-sn-glycero-3-phosphocholine (lyso-PAF). Also catalyzes the transfer of the acetate group from PAF to 1-hexadecanoyl-sn-glycero-3-phosphocholine forming lyso-PAF. Catalyzes the esterification of (24S)-hydroxycholesterol (24(S)OH-C), also known as cerebrosterol to produce 24(S)OH-C monoesters. The polypeptide is Phosphatidylcholine-sterol acyltransferase (LCAT) (Sus scrofa (Pig)).